We begin with the raw amino-acid sequence, 190 residues long: MSTKNRDRLVVTEDSDDDNEHEEMSSGDNSGEEGPSYGDAAARDPDETVAFPAPQRKKKKVIKKLTRKEQSLKHSVKEYRIKLAMVKPDITTDREKERNLRRIATKGVVQLFNAVSDRQKTMSDAVKEKMTARDRKEARERFDGKNFDSDKFADSGYGYGGKNEVKGEEEDEQMNIGDDEIDAGNYSDED.

Positions 1 to 11 (MSTKNRDRLVV) are enriched in basic and acidic residues. Disordered regions lie at residues 1–69 (MSTK…TRKE) and 119–190 (QKTM…SDED). Over residues 55-66 (QRKKKKVIKKLT) the composition is skewed to basic residues. Positions 59–84 (KKVIKKLTRKEQSLKHSVKEYRIKLA) form a coiled coil. Basic and acidic residues predominate over residues 119–153 (QKTMSDAVKEKMTARDRKEARERFDGKNFDSDKFA). The segment covering 167 to 190 (GEEEDEQMNIGDDEIDAGNYSDED) has biased composition (acidic residues).

It belongs to the RRP15 family.

This is RRP15-like protein from Caenorhabditis briggsae.